We begin with the raw amino-acid sequence, 28 residues long: Palustrin-1a (28 aa).

Residues Cys-22 and Cys-28 are joined by a disulfide bond.

As to expression, expressed by the skin glands.

The protein localises to the secreted. Antimicrobial activity against Gram-negative bacterium E.coli. The protein is Palustrin-1a of Lithobates palustris (Pickerel frog).